The sequence spans 290 residues: NAD kinase (290 aa).

Asp72 serves as the catalytic Proton acceptor. NAD(+) is bound by residues 72–73 (DG), Lys77, 145–146 (NE), Asp175, 186–191 (TAYSLS), and Ala210.

The protein belongs to the NAD kinase family. The cofactor is a divalent metal cation.

It is found in the cytoplasm. The catalysed reaction is NAD(+) + ATP = ADP + NADP(+) + H(+). Involved in the regulation of the intracellular balance of NAD and NADP, and is a key enzyme in the biosynthesis of NADP. Catalyzes specifically the phosphorylation on 2'-hydroxyl of the adenosine moiety of NAD to yield NADP. This Bacteroides fragilis (strain YCH46) protein is NAD kinase.